The sequence spans 310 residues: Coproporphyrin III ferrochelatase (310 aa).

Tyr-13 provides a ligand contact to Fe-coproporphyrin III. Tyr-13 provides a ligand contact to N-methylmesoporphyrin. Glu-20 contributes to the Mg(2+) binding site. Arg-30 serves as a coordination point for Fe-coproporphyrin III. Residue 31-33 coordinates N-methylmesoporphyrin; sequence RGR. Arg-46 contacts Mg(2+). Fe-coproporphyrin III is bound by residues 46 to 47, Ser-54, and Tyr-125; that span reads RY. N-methylmesoporphyrin is bound by residues His-183 and Lys-188. His-183 provides a ligand contact to Fe(2+). Glu-264 lines the Fe(2+) pocket. Residues Asp-268 and Glu-272 each coordinate Mg(2+).

The protein belongs to the ferrochelatase family. As to quaternary structure, monomer. Interacts with frataxin/Fra.

It localises to the cytoplasm. It catalyses the reaction Fe-coproporphyrin III + 2 H(+) = coproporphyrin III + Fe(2+). It participates in porphyrin-containing compound metabolism; protoheme biosynthesis. Stimulated by Mg(2+). Inhibited by Cd(2+). Inhibited by N-methylmesoporphyrin (N-MeMP) and 2,4-disulfonic acid deuteroporphyrin IX (dSDP). In terms of biological role, involved in coproporphyrin-dependent heme b biosynthesis. Catalyzes the insertion of ferrous iron into coproporphyrin III to form Fe-coproporphyrin III. It can also insert iron into protoporphyrin IX. Has weaker activity with 2,4 disulfonate, deuteroporphyrin and 2,4 hydroxyethyl. In vitro, can also use Zn(2+) or Cu(2+). The protein is Coproporphyrin III ferrochelatase of Bacillus subtilis (strain 168).